The following is a 431-amino-acid chain: Ammonium transporter 3 (431 aa).

At 1 to 27 (MEQFSTSSSESSDSSSEYSLEFYMDTS) the chain is on the extracellular side. A helical membrane pass occupies residues 28-48 (WVLDAANLVFFMQAGFGMLEA). Over 49–63 (GMVRAKNTKSILLKN) the chain is Cytoplasmic. The helical transmembrane segment at 64 to 84 (LINTAICAISYYCVGHSFAYG) threads the bilayer. Residues 85–102 (KVNPNSFVGFGNFFLMDY) are Extracellular-facing. A helical membrane pass occupies residues 103 to 125 (THYAYWMIQWAYAATATTIATGA). At 126–134 (MAERLQLHC) the chain is on the cytoplasmic side. The helical transmembrane segment at 135–155 (YILFTLVQTILIYPFVAHWIW) threads the bilayer. Residues 156–160 (SQNGW) lie on the Extracellular side of the membrane. A helical transmembrane segment spans residues 161-181 (LFDLGIVDFAGGAVIHIVAGI). Residues 182–211 (TGACGSFLLGPRIGRFNQESGKPKNLPGHS) are Cytoplasmic-facing. Residues 212–232 (VVLMSLGAMILWYSWYGYTAG) form a helical membrane-spanning segment. At 233–249 (ASLGMTRSRVLPASRVS) the chain is on the extracellular side. The chain crosses the membrane as a helical span at residues 250 to 270 (VVVTLSGATGLITVLGIGKIF). Residues 271-300 (NGHYDLVKGINGLIAGLVSSTSSCAYIEPW) lie on the Cytoplasmic side of the membrane. Residues 301–321 (AAIIIGFIGGIVYWFSSWALL) traverse the membrane as a helical segment. Topologically, residues 322 to 333 (NWLRLDDPVDST) are extracellular. The helical transmembrane segment at 334–354 (AIHLFGGCWSLISVAFFATHG) threads the bilayer. The Cytoplasmic segment spans residues 355-357 (RVR). A helical membrane pass occupies residues 358–378 (NPDIILPGGIFYGGGISLLWV). Residue glutamine 379 is a topological domain, extracellular. A helical transmembrane segment spans residues 380–400 (LVGMVLAILWAGFLSGIFFFT). The Cytoplasmic segment spans residues 401–431 (MDYFGKLRVDVDTELAGLDNSNHGGSAYIFD).

This sequence belongs to the ammonia transporter channel (TC 1.A.11.2) family.

The protein resides in the cell membrane. It localises to the endosome membrane. The protein localises to the cytoplasmic vesicle. Its subcellular location is the phagosome membrane. Ammonium transporter that mediates the import of ammonium in prespore cells. Controls ammonium homeostasis during growth and development. Ammonium has been shown to function as a morphogen at multiple steps during the development. May function as an ammonia sensor that relays information concerning ammonia concentrations to the signaling pathway involved in the slug versus culmination choice and regulates prestalk gene expression. The polypeptide is Ammonium transporter 3 (amtC) (Dictyostelium discoideum (Social amoeba)).